Reading from the N-terminus, the 646-residue chain is Macrolide export ATP-binding/permease protein MacB (646 aa).

Positions Ile7 to Ile245 constitute an ABC transporter domain. Gly43–Ser50 contacts ATP. A run of 4 helical transmembrane segments spans residues Val274–Gly294, Val528–Val548, Phe572–Leu592, and Phe609–Leu629.

The protein belongs to the ABC transporter superfamily. Macrolide exporter (TC 3.A.1.122) family. Homodimer.

It is found in the cell inner membrane. Non-canonical ABC transporter that contains transmembrane domains (TMD), which form a pore in the inner membrane, and an ATP-binding domain (NBD), which is responsible for energy generation. Confers resistance against macrolides. The sequence is that of Macrolide export ATP-binding/permease protein MacB from Brucella abortus (strain 2308).